The chain runs to 30 residues: Root cyclotide 1 (30 aa).

The segment at residues 1-30 (GIPCAESCVWIPCTVTALLGCSCSNKVCYN) is a cross-link (cyclopeptide (Gly-Asn)). 3 disulfides stabilise this stretch: C4-C21, C8-C23, and C13-C28.

This is a cyclic peptide. As to expression, expressed in roots.

Functionally, probably participates in a plant defense mechanism. The polypeptide is Root cyclotide 1 (Viola hederacea (Australian violet)).